The following is a 634-amino-acid chain: Probable potassium transport system protein Kup (634 aa).

Helical transmembrane passes span 19–39 (AVGLMVGAVGVCYGDIGTSPL), 62–82 (VLSLIFWSLIWVVSIKYVIFV), 113–133 (FVVVAGLIGAALFYGDSMITP), 150–170 (GLEHWTVPLALIVLIGLFLIQ), 177–197 (IGILFGPVMVLWFGALAALGV), 225–245 (IGVAILGATVLALTGAEALYA), 259–279 (WFLLVLPALVLNYFGQGATIL), 291–311 (LLAPGWALLPMVALSTLATVI), 349–369 (IYIGGVNWALMVGVVLLVLGF), 379–399 (YGVAVTGTMLITTLLMGVVIW), 406–426 (LWLGVPFFCVMLAVDSLFFAA), and 431–451 (VVQGGAFPVIAGIVIFILMST).

Belongs to the HAK/KUP transporter (TC 2.A.72) family.

The protein localises to the cell inner membrane. The catalysed reaction is K(+)(in) + H(+)(in) = K(+)(out) + H(+)(out). Transport of potassium into the cell. Likely operates as a K(+):H(+) symporter. The polypeptide is Probable potassium transport system protein Kup (Pseudomonas paraeruginosa (strain DSM 24068 / PA7) (Pseudomonas aeruginosa (strain PA7))).